The sequence spans 180 residues: uncharacterized protein (180 aa).

One can recognise an N-acetyltransferase domain in the interval 31–180 (LLVRTAEWLR…HLFEKEITAE (150 aa)).

This sequence belongs to the acetyltransferase family.

This is an uncharacterized protein from Bacillus subtilis (strain 168).